The chain runs to 303 residues: N-acetyl-D-glucosamine kinase (303 aa).

ATP-binding positions include 4–11 and 133–140; these read GFDIGGTK and GVGGGLIF. 4 residues coordinate Zn(2+): His157, Cys177, Cys179, and Cys184.

The protein belongs to the ROK (NagC/XylR) family. NagK subfamily.

The catalysed reaction is N-acetyl-D-glucosamine + ATP = N-acetyl-D-glucosamine 6-phosphate + ADP + H(+). It functions in the pathway cell wall biogenesis; peptidoglycan recycling. Catalyzes the phosphorylation of N-acetyl-D-glucosamine (GlcNAc) derived from cell-wall degradation, yielding GlcNAc-6-P. This is N-acetyl-D-glucosamine kinase from Escherichia coli O6:H1 (strain CFT073 / ATCC 700928 / UPEC).